The chain runs to 442 residues: F-box only protein 39 (442 aa).

An F-box domain is found at tryptophan 16 to isoleucine 61.

Directly interacts with SKP1 and CUL1.

Substrate-recognition component of the SCF (SKP1-CUL1-F-box protein)-type E3 ubiquitin ligase complex. This chain is F-box only protein 39 (FBXO39), found in Homo sapiens (Human).